An 829-amino-acid chain; its full sequence is Periplasmic nitrate reductase (829 aa).

The segment at residues 1-29 (MKMTRRAFVKANAAASAAAVAGVTLPATA) is a signal peptide (tat-type signal). Positions 41-97 (ITWDKAPCRFCGTGCSVLVGTQNGKVVATQGDPEAPVNKGLNCIKGYFLSKIMYGKD) constitute a 4Fe-4S Mo/W bis-MGD-type domain. Cys-48, Cys-51, Cys-55, and Cys-83 together coordinate [4Fe-4S] cluster. Mo-bis(molybdopterin guanine dinucleotide)-binding positions include Lys-85, Gln-152, Asn-177, Cys-181, 214 to 221 (WGSNMAEM), 245 to 249 (STYYH), 264 to 266 (QSD), Met-374, Gln-378, Asn-484, 510 to 511 (SD), Lys-533, Asp-560, and 718 to 727 (TGRVLEHWHT). Phe-794 provides a ligand contact to substrate. Mo-bis(molybdopterin guanine dinucleotide)-binding residues include Asn-802 and Lys-819.

It belongs to the prokaryotic molybdopterin-containing oxidoreductase family. NasA/NapA/NarB subfamily. Component of the periplasmic nitrate reductase NapAB complex composed of NapA and NapB. It depends on [4Fe-4S] cluster as a cofactor. The cofactor is Mo-bis(molybdopterin guanine dinucleotide). Predicted to be exported by the Tat system. The position of the signal peptide cleavage has not been experimentally proven.

Its subcellular location is the periplasm. The enzyme catalyses 2 Fe(II)-[cytochrome] + nitrate + 2 H(+) = 2 Fe(III)-[cytochrome] + nitrite + H2O. Its function is as follows. Catalytic subunit of the periplasmic nitrate reductase complex NapAB. Receives electrons from NapB and catalyzes the reduction of nitrate to nitrite. This chain is Periplasmic nitrate reductase, found in Vibrio atlanticus (strain LGP32) (Vibrio splendidus (strain Mel32)).